The chain runs to 177 residues: Large ribosomal subunit protein uL10 (177 aa).

The protein belongs to the universal ribosomal protein uL10 family. Part of the ribosomal stalk of the 50S ribosomal subunit. The N-terminus interacts with L11 and the large rRNA to form the base of the stalk. The C-terminus forms an elongated spine to which L12 dimers bind in a sequential fashion forming a multimeric L10(L12)X complex.

Forms part of the ribosomal stalk, playing a central role in the interaction of the ribosome with GTP-bound translation factors. This chain is Large ribosomal subunit protein uL10, found in Xanthomonas campestris pv. campestris (strain 8004).